The chain runs to 191 residues: MSIEFINESGYDGVNEEMLIDVCSYALGCLDVNPDAECTITAVDLDTIADLHVRWMDLEGPTDVMSFPMDELTPGASAGRPDAVEAGPAMLGDIVLCPEFAQRQATAAGHSLGHELALLTVHGCLHLLGYDHTTAAEEKEMFGLQNELLADWYEDLAARGVSYQPKPSGPKAFPDAAERAELDKEVPGGGI.

Zn(2+) contacts are provided by H122, H126, and H132. The tract at residues 164–191 is disordered; the sequence is QPKPSGPKAFPDAAERAELDKEVPGGGI. Residues 176–191 are compositionally biased toward basic and acidic residues; it reads AAERAELDKEVPGGGI.

The protein belongs to the endoribonuclease YbeY family. It depends on Zn(2+) as a cofactor.

It is found in the cytoplasm. Its function is as follows. Single strand-specific metallo-endoribonuclease involved in late-stage 70S ribosome quality control and in maturation of the 3' terminus of the 16S rRNA. The chain is Endoribonuclease YbeY from Corynebacterium aurimucosum (strain ATCC 700975 / DSM 44827 / CIP 107346 / CN-1) (Corynebacterium nigricans).